A 174-amino-acid chain; its full sequence is Crossover junction endodeoxyribonuclease RuvC (174 aa).

Active-site residues include Asp8, Glu67, and Asp139. The Mg(2+) site is built by Asp8, Glu67, and Asp139.

Belongs to the RuvC family. As to quaternary structure, homodimer which binds Holliday junction (HJ) DNA. The HJ becomes 2-fold symmetrical on binding to RuvC with unstacked arms; it has a different conformation from HJ DNA in complex with RuvA. In the full resolvosome a probable DNA-RuvA(4)-RuvB(12)-RuvC(2) complex forms which resolves the HJ. Requires Mg(2+) as cofactor.

Its subcellular location is the cytoplasm. It carries out the reaction Endonucleolytic cleavage at a junction such as a reciprocal single-stranded crossover between two homologous DNA duplexes (Holliday junction).. The RuvA-RuvB-RuvC complex processes Holliday junction (HJ) DNA during genetic recombination and DNA repair. Endonuclease that resolves HJ intermediates. Cleaves cruciform DNA by making single-stranded nicks across the HJ at symmetrical positions within the homologous arms, yielding a 5'-phosphate and a 3'-hydroxyl group; requires a central core of homology in the junction. The consensus cleavage sequence is 5'-(A/T)TT(C/G)-3'. Cleavage occurs on the 3'-side of the TT dinucleotide at the point of strand exchange. HJ branch migration catalyzed by RuvA-RuvB allows RuvC to scan DNA until it finds its consensus sequence, where it cleaves and resolves the cruciform DNA. The protein is Crossover junction endodeoxyribonuclease RuvC of Pseudomonas savastanoi pv. phaseolicola (strain 1448A / Race 6) (Pseudomonas syringae pv. phaseolicola (strain 1448A / Race 6)).